Here is a 198-residue protein sequence, read N- to C-terminus: Ribonuclease HII (198 aa).

Residues Leu-5–Gly-195 enclose the RNase H type-2 domain. Asp-11, Glu-12, and Asp-103 together coordinate a divalent metal cation.

The protein belongs to the RNase HII family. Mn(2+) serves as cofactor. It depends on Mg(2+) as a cofactor.

It localises to the cytoplasm. The enzyme catalyses Endonucleolytic cleavage to 5'-phosphomonoester.. Its function is as follows. Endonuclease that specifically degrades the RNA of RNA-DNA hybrids. The polypeptide is Ribonuclease HII (Chromobacterium violaceum (strain ATCC 12472 / DSM 30191 / JCM 1249 / CCUG 213 / NBRC 12614 / NCIMB 9131 / NCTC 9757 / MK)).